The sequence spans 574 residues: 2-succinyl-5-enolpyruvyl-6-hydroxy-3-cyclohexene-1-carboxylate synthase (574 aa).

The protein belongs to the TPP enzyme family. MenD subfamily. As to quaternary structure, homodimer. Mg(2+) serves as cofactor. Requires Mn(2+) as cofactor. The cofactor is thiamine diphosphate.

The enzyme catalyses isochorismate + 2-oxoglutarate + H(+) = 5-enolpyruvoyl-6-hydroxy-2-succinyl-cyclohex-3-ene-1-carboxylate + CO2. It functions in the pathway quinol/quinone metabolism; 1,4-dihydroxy-2-naphthoate biosynthesis; 1,4-dihydroxy-2-naphthoate from chorismate: step 2/7. Its pathway is cofactor biosynthesis; phylloquinone biosynthesis. Functionally, catalyzes the thiamine diphosphate-dependent decarboxylation of 2-oxoglutarate and the subsequent addition of the resulting succinic semialdehyde-thiamine pyrophosphate anion to isochorismate to yield 2-succinyl-5-enolpyruvyl-6-hydroxy-3-cyclohexene-1-carboxylate (SEPHCHC). The sequence is that of 2-succinyl-5-enolpyruvyl-6-hydroxy-3-cyclohexene-1-carboxylate synthase from Synechococcus sp. (strain RCC307).